The chain runs to 200 residues: Recombination protein RecR (200 aa).

The C4-type zinc-finger motif lies at 57 to 72; sequence CERCRNYAQSTLCPVC. The Toprim domain occupies 80–175; that stretch reads SLVCIVATPG…GVSRIAQGVP (96 aa).

Belongs to the RecR family.

In terms of biological role, may play a role in DNA repair. It seems to be involved in an RecBC-independent recombinational process of DNA repair. It may act with RecF and RecO. The chain is Recombination protein RecR from Alcanivorax borkumensis (strain ATCC 700651 / DSM 11573 / NCIMB 13689 / SK2).